Consider the following 257-residue polypeptide: Small ribosomal subunit protein uS2 (257 aa).

It belongs to the universal ribosomal protein uS2 family.

The polypeptide is Small ribosomal subunit protein uS2 (Bartonella henselae (strain ATCC 49882 / DSM 28221 / CCUG 30454 / Houston 1) (Rochalimaea henselae)).